The sequence spans 819 residues: Serine/threonine-protein phosphatase 1 regulatory subunit 10 (819 aa).

Residues Lys-73 to Gln-147 form the TFIIS N-terminal domain. Disordered stretches follow at residues Gln-151 to Ser-204, Lys-296 to Val-391, and Ser-495 to Met-785. Basic and acidic residues-rich tracts occupy residues Ala-153–Lys-165 and Lys-173–Lys-190. Residues Ser-305–Lys-327 show a composition bias toward polar residues. The PP1-binding motif motif lies at Lys-386–Val-415. Positions Ser-495–Asp-504 are enriched in basic and acidic residues. Composition is skewed to polar residues over residues Met-533 to Asp-543 and Met-560 to Leu-578. The span at Lys-589–Lys-604 shows a compositional bias: basic and acidic residues. A compositionally biased stretch (low complexity) spans Leu-606–Gly-618. Composition is skewed to pro residues over residues Phe-635–Asn-663 and His-670–Asn-695. Basic and acidic residues-rich tracts occupy residues His-704–Asp-715 and His-758–Arg-777. The C3H1-type zinc finger occupies Met-785–Ile-813.

Component of the PNUTS-PP1 complex (also named PTW/PP1 complex).

Its subcellular location is the nucleus. The protein localises to the chromosome. In terms of biological role, substrate-recognition component of the PNUTS-PP1 protein phosphatase complex, a protein phosphatase 1 (PP1) complex that promotes RNA polymerase II transcription pause-release, allowing transcription elongation. Promoter-proximal pausing by RNA polymerase II is a transcription halt following transcription initiation but prior to elongation, which acts as a checkpoint to control that transcripts are favorably configured for transcriptional elongation. The PNUTS-PP1 complex mediates the release of RNA polymerase II from promoter-proximal region of genes by catalyzing dephosphorylation of proteins involved in transcription. In some context, PPP1R10/PNUTS also acts as an inhibitor of protein phosphatase 1 (PP1) activity by preventing access to substrates. The protein is Serine/threonine-protein phosphatase 1 regulatory subunit 10 (ppp1r10) of Xenopus laevis (African clawed frog).